Here is a 715-residue protein sequence, read N- to C-terminus: Phosphoribosylformylglycinamidine synthase subunit PurL (715 aa).

The active site involves His-33. Tyr-36 serves as a coordination point for ATP. Glu-77 contributes to the Mg(2+) binding site. Residues 78–81 (SHNH) and Arg-100 each bind substrate. His-79 acts as the Proton acceptor in catalysis. A Mg(2+)-binding site is contributed by Asp-101. Position 225 (Gln-225) interacts with substrate. Asp-253 is a Mg(2+) binding site. Residue 297-299 (ESQ) participates in substrate binding. Positions 476 and 513 each coordinate ATP. Asn-514 is a binding site for Mg(2+). Ser-516 lines the substrate pocket.

Belongs to the FGAMS family. In terms of assembly, monomer. Part of the FGAM synthase complex composed of 1 PurL, 1 PurQ and 2 PurS subunits.

Its subcellular location is the cytoplasm. It carries out the reaction N(2)-formyl-N(1)-(5-phospho-beta-D-ribosyl)glycinamide + L-glutamine + ATP + H2O = 2-formamido-N(1)-(5-O-phospho-beta-D-ribosyl)acetamidine + L-glutamate + ADP + phosphate + H(+). Its pathway is purine metabolism; IMP biosynthesis via de novo pathway; 5-amino-1-(5-phospho-D-ribosyl)imidazole from N(2)-formyl-N(1)-(5-phospho-D-ribosyl)glycinamide: step 1/2. Functionally, part of the phosphoribosylformylglycinamidine synthase complex involved in the purines biosynthetic pathway. Catalyzes the ATP-dependent conversion of formylglycinamide ribonucleotide (FGAR) and glutamine to yield formylglycinamidine ribonucleotide (FGAM) and glutamate. The FGAM synthase complex is composed of three subunits. PurQ produces an ammonia molecule by converting glutamine to glutamate. PurL transfers the ammonia molecule to FGAR to form FGAM in an ATP-dependent manner. PurS interacts with PurQ and PurL and is thought to assist in the transfer of the ammonia molecule from PurQ to PurL. The chain is Phosphoribosylformylglycinamidine synthase subunit PurL from Methanosarcina barkeri (strain Fusaro / DSM 804).